Consider the following 158-residue polypeptide: MYYDIIESPIGPILLAGNEKGLKHLDFLKGKKRIEIPADWIENKKFFREAARQLEAYFSGKLESFDLKLAPEGTDFQKSVWKALCEIPYGETRTYKEIAVSIGKPRAYRAVGLANNRNPIAIIIPCHRVIGSDGKLTGYASGLDIKEFLLKLEENNLR.

Cys126 functions as the Nucleophile; methyl group acceptor in the catalytic mechanism.

This sequence belongs to the MGMT family.

It localises to the cytoplasm. The enzyme catalyses a 6-O-methyl-2'-deoxyguanosine in DNA + L-cysteinyl-[protein] = S-methyl-L-cysteinyl-[protein] + a 2'-deoxyguanosine in DNA. It catalyses the reaction a 4-O-methyl-thymidine in DNA + L-cysteinyl-[protein] = a thymidine in DNA + S-methyl-L-cysteinyl-[protein]. Involved in the cellular defense against the biological effects of O6-methylguanine (O6-MeG) and O4-methylthymine (O4-MeT) in DNA. Repairs the methylated nucleobase in DNA by stoichiometrically transferring the methyl group to a cysteine residue in the enzyme. This is a suicide reaction: the enzyme is irreversibly inactivated. This Methanosarcina barkeri (strain Fusaro / DSM 804) protein is Methylated-DNA--protein-cysteine methyltransferase.